The following is a 238-amino-acid chain: Cysteine-rich venom protein pseudechetoxin-like (238 aa).

A signal peptide spans 1–19 (MIAFTVLLSLAAVLQQSSG). Residues 20 to 28 (TVDFASESS) constitute a propeptide that is removed on maturation. An SCP domain is found at 38–164 (VDKHNDLRRS…STKYLYVCQY (127 aa)). Cystine bridges form between cysteine 75–cysteine 153, cysteine 92–cysteine 165, cysteine 148–cysteine 162, cysteine 184–cysteine 191, cysteine 187–cysteine 196, cysteine 200–cysteine 233, cysteine 209–cysteine 227, and cysteine 218–cysteine 231. The ShKT domain occupies 200–233 (CKHNNDFSNCKALAKKSKCQTEWIKSKCPATCFC).

This sequence belongs to the CRISP family. Expressed by the venom gland.

Its subcellular location is the secreted. Blocks olfactory (CNGA2) and retinal (CNGA1) CNG channel currents. Does not affect neither depolarization- nor caffeine-induced contraction of smooth muscle. The chain is Cysteine-rich venom protein pseudechetoxin-like from Oxyuranus scutellatus scutellatus (Australian taipan).